The following is a 318-amino-acid chain: Chlorophyllase-2 (318 aa).

The GXSXG signature appears at 136 to 140 (GHSRG). Ser138 (nucleophile) is an active-site residue. Residues Asp167 and His244 each act as charge relay system in the active site.

It belongs to the AB hydrolase superfamily. Lipase family. As to expression, expressed in leaves, flowers and flower buds, but not in roots.

The protein resides in the cytoplasm. It is found in the cytosol. It catalyses the reaction a chlorophyll + H2O = a chlorophyllide + phytol + H(+). It carries out the reaction chlorophyll a + H2O = phytol + chlorophyllide a + H(+). It functions in the pathway porphyrin-containing compound metabolism; chlorophyll degradation. Catalyzes the hydrolysis of ester bond in chlorophyll to yield chlorophyllide and phytol. Does not seem to be required for chlorophyll degradation during senescence. The sequence is that of Chlorophyllase-2 from Arabidopsis thaliana (Mouse-ear cress).